The sequence spans 232 residues: Ashwin (232 aa).

Composition is skewed to basic and acidic residues over residues 64–97 (DLPK…DGLR) and 116–127 (KKTENGDNDRLR). The segment at 64-232 (DLPKSRWGKM…KRKIQHVTWP (169 aa)) is disordered. The span at 130–140 (PQASATSNTFR) shows a compositional bias: polar residues. The residue at position 143 (S143) is a Phosphoserine. Over residues 144–156 (DSSSSVSPLVLSS) the composition is skewed to low complexity. Over residues 163–179 (KMEHGNNDNKQNHDLTH) the composition is skewed to basic and acidic residues. S182, S189, and S193 each carry phosphoserine. At T198 the chain carries Phosphothreonine.

This sequence belongs to the ashwin family. As to quaternary structure, component of the tRNA-splicing ligase complex.

It is found in the nucleus. The polypeptide is Ashwin (Bos taurus (Bovine)).